Here is a 436-residue protein sequence, read N- to C-terminus: Adenosylhomocysteinase (436 aa).

T62, D136, and E161 together coordinate substrate. NAD(+) is bound at residue T162 to T164. Substrate contacts are provided by K191 and D195. NAD(+) is bound by residues N196, G225–G230, E248, N283, I304–H306, and N352.

This sequence belongs to the adenosylhomocysteinase family. Requires NAD(+) as cofactor.

It localises to the cytoplasm. It catalyses the reaction S-adenosyl-L-homocysteine + H2O = L-homocysteine + adenosine. It functions in the pathway amino-acid biosynthesis; L-homocysteine biosynthesis; L-homocysteine from S-adenosyl-L-homocysteine: step 1/1. Functionally, may play a key role in the regulation of the intracellular concentration of adenosylhomocysteine. In Leptospira borgpetersenii serovar Hardjo-bovis (strain JB197), this protein is Adenosylhomocysteinase.